Here is a 97-residue protein sequence, read N- to C-terminus: Aspartyl/glutamyl-tRNA(Asn/Gln) amidotransferase subunit C (97 aa).

The protein belongs to the GatC family. Heterotrimer of A, B and C subunits.

The enzyme catalyses L-glutamyl-tRNA(Gln) + L-glutamine + ATP + H2O = L-glutaminyl-tRNA(Gln) + L-glutamate + ADP + phosphate + H(+). It carries out the reaction L-aspartyl-tRNA(Asn) + L-glutamine + ATP + H2O = L-asparaginyl-tRNA(Asn) + L-glutamate + ADP + phosphate + 2 H(+). Its function is as follows. Allows the formation of correctly charged Asn-tRNA(Asn) or Gln-tRNA(Gln) through the transamidation of misacylated Asp-tRNA(Asn) or Glu-tRNA(Gln) in organisms which lack either or both of asparaginyl-tRNA or glutaminyl-tRNA synthetases. The reaction takes place in the presence of glutamine and ATP through an activated phospho-Asp-tRNA(Asn) or phospho-Glu-tRNA(Gln). The protein is Aspartyl/glutamyl-tRNA(Asn/Gln) amidotransferase subunit C of Synechococcus sp. (strain CC9902).